The primary structure comprises 933 residues: uncharacterized protein (933 aa).

Residues Met1 to His28 show a composition bias toward polar residues. 3 disordered regions span residues Met1–Asp135, Met173–Asp194, and Ala252–Gln275. A compositionally biased stretch (basic and acidic residues) spans Asn29 to Ala47. Over residues Ser49–Ser59 the composition is skewed to low complexity. 2 stretches are compositionally biased toward polar residues: residues Thr87–His101 and Asn108–Asp135. Acidic residues predominate over residues Met173–Arg182. A compositionally biased stretch (polar residues) spans Glu264–Gln275. 8 WD repeats span residues Ser314–Ser353, Gly385–Cys423, Glu425–Trp465, Glu467–Gln506, Ala517–Lys563, Ala568–Thr607, Ala617–Ser657, and Pro665–Lys710. Phosphoserine is present on Ser722. The tract at residues Asn756–Leu796 is disordered. Residues Ala757–Asn768 show a composition bias toward polar residues. Basic and acidic residues predominate over residues Asp769–Gly783.

The protein localises to the endoplasmic reticulum. It is found in the nucleus. This is an uncharacterized protein from Schizosaccharomyces pombe (strain 972 / ATCC 24843) (Fission yeast).